Consider the following 588-residue polypeptide: A-type ATP synthase subunit A (588 aa).

ATP is bound at residue 237–244 (GPFGSGKT).

Belongs to the ATPase alpha/beta chains family. As to quaternary structure, has multiple subunits with at least A(3), B(3), C, D, E, F, H, I and proteolipid K(x).

It localises to the cell membrane. The enzyme catalyses ATP + H2O + 4 H(+)(in) = ADP + phosphate + 5 H(+)(out). Component of the A-type ATP synthase that produces ATP from ADP in the presence of a proton gradient across the membrane. The A chain is the catalytic subunit. The protein is A-type ATP synthase subunit A of Methanoregula boonei (strain DSM 21154 / JCM 14090 / 6A8).